The chain runs to 459 residues: NADH-ubiquinone oxidoreductase chain 4 (459 aa).

The next 12 membrane-spanning stretches (helical) occupy residues Pro-20 to Phe-42, Met-61 to Ser-81, Leu-103 to Phe-123, Ile-148 to Leu-168, Phe-194 to Leu-214, Pro-224 to Ile-244, Leu-257 to Met-277, Ser-284 to Ile-303, Trp-307 to Leu-329, Ile-350 to Pro-370, Thr-392 to Ser-414, and Leu-435 to Trp-455.

Belongs to the complex I subunit 4 family.

The protein resides in the mitochondrion membrane. The enzyme catalyses a ubiquinone + NADH + 5 H(+)(in) = a ubiquinol + NAD(+) + 4 H(+)(out). Core subunit of the mitochondrial membrane respiratory chain NADH dehydrogenase (Complex I) that is believed to belong to the minimal assembly required for catalysis. Complex I functions in the transfer of electrons from NADH to the respiratory chain. The immediate electron acceptor for the enzyme is believed to be ubiquinone. This Polypterus ornatipinnis (Ornate bichir) protein is NADH-ubiquinone oxidoreductase chain 4 (MT-ND4).